The following is a 396-amino-acid chain: MSKYKRIFTIVIDSLGIGAMNDSEKYGDVNVDTLGHIAESVDTFNIPNLQKMGIANLHPIKHVAPVENPIGYQAKMAEASVGKDTMTGHWEMMGLHITKPFKTFTDTGFPQELLDELTARTGHKIVGNKSASGTEILDELGEHQIATGDMIVYTSADSVLQICGQEETFGLEELYRCCEIARELTLKDEWKVGRIIARPYLGTKKGEFKRTSNRHDYALKPYGRTVLNELKDNNFDVISVGKIKDIFDGEGITEGNKSKSSVHGMEQTLEIMDRDFTGFCFINLVDFDALWGHRRNPQGYAEELEKFDVNLGKVLEKLHEDDLLIITADHGNDPTYTGTDHTREYVPFLAYSPSMKGHGQLETPKTFATIGATIADNFGLKMPEGTIGESVLNKLV.

Residues Asp13, Asp288, His293, Asp329, His330, and His341 each coordinate Mn(2+).

The protein belongs to the phosphopentomutase family. Mn(2+) serves as cofactor.

The protein localises to the cytoplasm. The enzyme catalyses 2-deoxy-alpha-D-ribose 1-phosphate = 2-deoxy-D-ribose 5-phosphate. It catalyses the reaction alpha-D-ribose 1-phosphate = D-ribose 5-phosphate. Its pathway is carbohydrate degradation; 2-deoxy-D-ribose 1-phosphate degradation; D-glyceraldehyde 3-phosphate and acetaldehyde from 2-deoxy-alpha-D-ribose 1-phosphate: step 1/2. Isomerase that catalyzes the conversion of deoxy-ribose 1-phosphate (dRib-1-P) and ribose 1-phosphate (Rib-1-P) to deoxy-ribose 5-phosphate (dRib-5-P) and ribose 5-phosphate (Rib-5-P), respectively. The protein is Phosphopentomutase of Clostridium perfringens (strain SM101 / Type A).